We begin with the raw amino-acid sequence, 373 residues long: Bifunctional enzyme IspD/IspF (373 aa).

The interval 1-213 (MSDLTLVLLG…CLQKPSATKR (213 aa)) is 2-C-methyl-D-erythritol 4-phosphate cytidylyltransferase. Positions 213 to 373 (RIGNGLDVHA…TLHYFDWSEI (161 aa)) are 2-C-methyl-D-erythritol 2,4-cyclodiphosphate synthase. 2 residues coordinate a divalent metal cation: Asp219 and His221. 4-CDP-2-C-methyl-D-erythritol 2-phosphate-binding positions include 219 to 221 (DVH) and 245 to 246 (HS). His253 is an a divalent metal cation binding site. 4-CDP-2-C-methyl-D-erythritol 2-phosphate is bound by residues 267–269 (DIG), 272–276 (FPDSD), 343–346 (TTTE), Phe350, and Arg353.

In the N-terminal section; belongs to the IspD/TarI cytidylyltransferase family. IspD subfamily. The protein in the C-terminal section; belongs to the IspF family. Requires a divalent metal cation as cofactor.

The enzyme catalyses 2-C-methyl-D-erythritol 4-phosphate + CTP + H(+) = 4-CDP-2-C-methyl-D-erythritol + diphosphate. The catalysed reaction is 4-CDP-2-C-methyl-D-erythritol 2-phosphate = 2-C-methyl-D-erythritol 2,4-cyclic diphosphate + CMP. Its pathway is isoprenoid biosynthesis; isopentenyl diphosphate biosynthesis via DXP pathway; isopentenyl diphosphate from 1-deoxy-D-xylulose 5-phosphate: step 2/6. It participates in isoprenoid biosynthesis; isopentenyl diphosphate biosynthesis via DXP pathway; isopentenyl diphosphate from 1-deoxy-D-xylulose 5-phosphate: step 4/6. Its function is as follows. Bifunctional enzyme that catalyzes the formation of 4-diphosphocytidyl-2-C-methyl-D-erythritol from CTP and 2-C-methyl-D-erythritol 4-phosphate (MEP) (IspD), and catalyzes the conversion of 4-diphosphocytidyl-2-C-methyl-D-erythritol 2-phosphate (CDP-ME2P) to 2-C-methyl-D-erythritol 2,4-cyclodiphosphate (ME-CPP) with a corresponding release of cytidine 5-monophosphate (CMP) (IspF). This is Bifunctional enzyme IspD/IspF from Nitratiruptor sp. (strain SB155-2).